Consider the following 598-residue polypeptide: Protein unc-93 homolog B1 (598 aa).

The segment at Met1–Leu36 is disordered. 5 helical membrane-spanning segments follow: residues Val64–Met84, Lys110–Ile130, Phe132–Thr152, Thr160–Gly180, and Ile223–Leu243. N-linked (GlcNAc...) asparagine glycosylation is found at Asn251 and Asn272. The next 5 membrane-spanning stretches (helical) occupy residues Leu285–Gly305, Leu343–Leu363, Leu378–Trp398, Val403–Ala423, and Val428–Leu448. Asn449 carries an N-linked (GlcNAc...) asparagine glycan. Transmembrane regions (helical) follow at residues Phe469–Ser489 and Ala495–Glu515. The segment at Pro524–Gln598 is disordered. Positions Glu544–Gly554 are enriched in acidic residues. A phosphoserine mark is found at Ser547 and Ser550.

The protein belongs to the unc-93 family. Interacts with TLR3, TLR5, TLR7, TLR8, TLR9 and TLR13 (probably via transmembrane domain). Post-translationally, N-glycosylated.

It localises to the endoplasmic reticulum membrane. The protein resides in the endosome. The protein localises to the lysosome. It is found in the cytoplasmic vesicle. Its subcellular location is the phagosome. Functionally, plays an important role in innate and adaptive immunity by regulating nucleotide-sensing Toll-like receptor (TLR) signaling. Required for the transport of a subset of TLRs (including TLR3, TLR7 and TLR9) from the endoplasmic reticulum to endolysosomes where they can engage pathogen nucleotides and activate signaling cascades. May play a role in autoreactive B-cells removal. The sequence is that of Protein unc-93 homolog B1 from Mus musculus (Mouse).